Consider the following 101-residue polypeptide: Protein S100-A4 (101 aa).

Ala2 bears the N-acetylalanine mark. EF-hand domains follow at residues 12–47 and 50–85; these read IVST…SFLG and TDEA…IAMM. Residues Lys28 and Glu33 each contribute to the Ca(2+) site. Lys35 carries the post-translational modification N6-acetyllysine. Ca(2+) is bound by residues Asp63, Asn65, Asp67, Glu69, and Glu74.

The protein belongs to the S-100 family. In terms of assembly, homodimer. Interacts with PPFIBP1 in a calcium-dependent mode. Interacts with PGLYRP1; this complex acts as a chemoattractant that promotes lymphocyte movement. Interacts with MYH9; this interaction increases cell motility. Interacts with Annexin 2/ANXA2. Interacts with TP53; this interaction promotes TP53 degradation. Interacts with CCR5 and CXCR3. Interacts with FCGR3A; this interaction inhibits PKC-dependent phosphorylation of FCGR3A. In terms of tissue distribution, specifically expressed in different metastatic cells.

It localises to the secreted. It is found in the nucleus. The protein resides in the cytoplasm. In terms of biological role, calcium-binding protein that plays a role in various cellular processes including motility, angiogenesis, cell differentiation, apoptosis, and autophagy. Increases cell motility and invasiveness by interacting with non-muscle myosin heavy chain (NMMHC) IIA/MYH9. Mechanistically, promotes filament depolymerization and increases the amount of soluble myosin-IIA, resulting in the formation of stable protrusions facilitating chemotaxis. Also modulates the pro-apoptotic function of TP53 by binding to its C-terminal transactivation domain within the nucleus and reducing its protein levels. Within the extracellular space, stimulates cytokine production including granulocyte colony-stimulating factor and CCL24 from T-lymphocytes. In addition, stimulates T-lymphocyte chemotaxis by acting as a chemoattractant complex with PGLYRP1 that promotes lymphocyte migration via CCR5 and CXCR3 receptors. This is Protein S100-A4 (S100a4) from Mus musculus (Mouse).